A 134-amino-acid chain; its full sequence is Putative protein KRIP1 (134 aa).

Residues 1-134 form a disordered region; that stretch reads MSPVHRSRTS…PDPALPLQML (134 aa). Composition is skewed to polar residues over residues 9–24, 43–55, and 64–79; these read TSQTQEAHKPTSTLSF, SQPNACSRQSHVS, and CSQSKVSPPGTATNPN. Over residues 119 to 128 the composition is skewed to pro residues; it reads PAKPALPDPA.

In terms of tissue distribution, abundant expression is found in prostate, restricted to cells of epithelial origin in normal and diseased glands. Very low expression is detected in pancreas and ovary.

The protein localises to the cytoplasm. It is found in the nucleus. The chain is Putative protein KRIP1 (KLKP1) from Homo sapiens (Human).